The primary structure comprises 500 residues: Glutamyl-tRNA(Gln) amidotransferase subunit A (500 aa).

Residues Lys-81 and Ser-161 each act as charge relay system in the active site. The Acyl-ester intermediate role is filled by Ser-185.

This sequence belongs to the amidase family. GatA subfamily. Heterotrimer of A, B and C subunits.

It catalyses the reaction L-glutamyl-tRNA(Gln) + L-glutamine + ATP + H2O = L-glutaminyl-tRNA(Gln) + L-glutamate + ADP + phosphate + H(+). In terms of biological role, allows the formation of correctly charged Gln-tRNA(Gln) through the transamidation of misacylated Glu-tRNA(Gln) in organisms which lack glutaminyl-tRNA synthetase. The reaction takes place in the presence of glutamine and ATP through an activated gamma-phospho-Glu-tRNA(Gln). This chain is Glutamyl-tRNA(Gln) amidotransferase subunit A, found in Rhodospirillum rubrum (strain ATCC 11170 / ATH 1.1.1 / DSM 467 / LMG 4362 / NCIMB 8255 / S1).